We begin with the raw amino-acid sequence, 283 residues long: Elongation factor Ts (283 aa).

Positions 84–87 are involved in Mg(2+) ion dislocation from EF-Tu; that stretch reads TDFV.

The protein belongs to the EF-Ts family.

Its subcellular location is the cytoplasm. Functionally, associates with the EF-Tu.GDP complex and induces the exchange of GDP to GTP. It remains bound to the aminoacyl-tRNA.EF-Tu.GTP complex up to the GTP hydrolysis stage on the ribosome. This is Elongation factor Ts from Bifidobacterium longum (strain DJO10A).